A 167-amino-acid chain; its full sequence is Leptin (167 aa).

The first 21 residues, 1 to 21, serve as a signal peptide directing secretion; it reads MLCGPLCRFLWLWPYLSYVEA. Cys117 and Cys167 are disulfide-bonded.

The protein belongs to the leptin family.

It localises to the secreted. Its function is as follows. Key player in the regulation of energy balance and body weight control. Once released into the circulation, has central and peripheral effects by binding LEPR, found in many tissues, which results in the activation of several major signaling pathways. In the hypothalamus, acts as an appetite-regulating factor that induces a decrease in food intake and an increase in energy consumption by inducing anorexinogenic factors and suppressing orexigenic neuropeptides, also regulates bone mass and secretion of hypothalamo-pituitary-adrenal hormones. In the periphery, increases basal metabolism, influences reproductive function, regulates pancreatic beta-cell function and insulin secretion, is pro-angiogenic for endothelial cell and affects innate and adaptive immunity. In the arcuate nucleus of the hypothalamus, activates by depolarization POMC neurons inducing FOS and SOCS3 expression to release anorexigenic peptides and inhibits by hyperpolarization NPY neurons inducing SOCS3 with a consequent reduction on release of orexigenic peptides. In addition to its known satiety inducing effect, has a modulatory role in nutrient absorption. In the intestine, reduces glucose absorption by enterocytes by activating PKC and leading to a sequential activation of p38, PI3K and ERK signaling pathways which exerts an inhibitory effect on glucose absorption. Acts as a growth factor on certain tissues, through the activation of different signaling pathways increases expression of genes involved in cell cycle regulation such as CCND1, via JAK2-STAT3 pathway, or VEGFA, via MAPK1/3 and PI3K-AKT1 pathways. May also play an apoptotic role via JAK2-STAT3 pathway and up-regulation of BIRC5 expression. Pro-angiogenic, has mitogenic activity on vascular endothelial cells and plays a role in matrix remodeling by regulating the expression of matrix metalloproteinases (MMPs) and tissue inhibitors of metalloproteinases (TIMPs). In innate immunity, modulates the activity and function of neutrophils by increasing chemotaxis and the secretion of oxygen radicals. Increases phagocytosis by macrophages and enhances secretion of pro-inflammatory mediators. Increases cytotoxic ability of NK cells. Plays a pro-inflammatory role, in synergy with IL1B, by inducing NOS2 which promotes the production of IL6, IL8 and Prostaglandin E2, through a signaling pathway that involves JAK2, PI3K, MAP2K1/MEK1 and MAPK14/p38. In adaptive immunity, promotes the switch of memory T-cells towards T helper-1 cell immune responses. Increases CD4(+)CD25(-) T-cell proliferation and reduces autophagy during TCR (T-cell receptor) stimulation, through MTOR signaling pathway activation and BCL2 up-regulation. In Felis catus (Cat), this protein is Leptin (LEP).